A 797-amino-acid polypeptide reads, in one-letter code: Protocadherin beta-9 (797 aa).

The signal sequence occupies residues 1 to 26 (MKTRGFSFPRQRQVLFLFLFWGVSLA). Residues 27-690 (GSGFGRYSVT…AQADLLTVYL (664 aa)) lie on the Extracellular side of the membrane. 5 Cadherin domains span residues 35–133 (VTEE…SPVF), 138–242 (MVLK…VPQF), 247–347 (YETQ…PPEL), 352–451 (LSNS…APAF), and 456–561 (YTLF…SPFV). Asn169 carries N-linked (GlcNAc...) asparagine glycosylation. A glycan (N-linked (GlcNAc...) asparagine) is linked at Asn418. A glycan (N-linked (GlcNAc...) asparagine) is linked at Asn567. Residues 568–671 (GSAPCTELVP…LVDGFSQPYL (104 aa)) enclose the Cadherin 6 domain. The helical transmembrane segment at 691–711 (VVALASVSSLFLLSVLLFVAV) threads the bilayer. The Cytoplasmic portion of the chain corresponds to 712–797 (RLCRRSRAAS…TLPNSFGFNY (86 aa)). Positions 777 to 797 (HRGGKEIEENSTLPNSFGFNY) are disordered. Polar residues predominate over residues 786–797 (NSTLPNSFGFNY).

The protein resides in the cell membrane. Functionally, potential calcium-dependent cell-adhesion protein. May be involved in the establishment and maintenance of specific neuronal connections in the brain. The polypeptide is Protocadherin beta-9 (PCDHB9) (Homo sapiens (Human)).